Reading from the N-terminus, the 146-residue chain is Hemoglobin subunit beta (146 aa).

Position 1 is an N-acetylvaline (Val-1). The region spanning 2 to 146 is the Globin domain; the sequence is HLTGEEKSTV…VATALAHKYH (145 aa). Ser-44 carries the post-translational modification Phosphoserine. At Lys-59 the chain carries N6-acetyllysine. His-63 provides a ligand contact to heme b. Lys-82 is modified (N6-acetyllysine). A heme b-binding site is contributed by His-92. Position 93 is an S-nitrosocysteine (Cys-93). Lys-144 carries the post-translational modification N6-acetyllysine.

The protein belongs to the globin family. As to quaternary structure, heterotetramer of two alpha chains and two beta chains. Red blood cells.

Involved in oxygen transport from the lung to the various peripheral tissues. This is Hemoglobin subunit beta (HBB) from Macrotus californicus (Californian leaf-nosed bat).